The sequence spans 180 residues: Peptide deformylase (180 aa).

Fe cation contacts are provided by C96 and H138. Residue E139 is part of the active site. H142 contacts Fe cation.

The protein belongs to the polypeptide deformylase family. It depends on Fe(2+) as a cofactor.

It carries out the reaction N-terminal N-formyl-L-methionyl-[peptide] + H2O = N-terminal L-methionyl-[peptide] + formate. Removes the formyl group from the N-terminal Met of newly synthesized proteins. Requires at least a dipeptide for an efficient rate of reaction. N-terminal L-methionine is a prerequisite for activity but the enzyme has broad specificity at other positions. The polypeptide is Peptide deformylase (Rhodopseudomonas palustris (strain BisA53)).